The following is a 432-amino-acid chain: MSTQMSVFLSQDSAAPHWGEKALLSFSETGATIHLGEGHDLGAIQRAARQLDGQGIHSVLLSGEHWDLESIWAFHQGYRNPKKHGLLEWTALSEEDQTELQARIKATDFTRDIINKTAEEVAPRQLATMAAEFIKSVAPEGTVTARIVKDKDLLAEGWEGIYAVGRGSDRTSAMLQLDYNPTGDENAPVFACLVGKGITFDSGGYSLKPSNFMSAMKADMGGSGTITGGLGLAILRGLNKRVKLILCCAENMVSGRALKLGDIITYKNGKTVEIMNTDAEGRLVLADGLIYASEHNPELIIDCATLTGAAKNALGNDYHALMSFDDELSHQALTAANKEKEGLWPLPLADFHRGMLPSNFADLSNISSGDYSPGASTAAAFLSYFVEDYKKGWLHFDCAGTYRKSASDKWAAGATGMGVRTLARLLNEQAEK.

Mn(2+) contacts are provided by K196 and D201. Residue K208 is part of the active site. Residues D219, D278, and E280 each contribute to the Mn(2+) site. R282 is an active-site residue.

This sequence belongs to the peptidase M17 family. As to quaternary structure, homohexamer. Mn(2+) is required as a cofactor.

It is found in the cytoplasm. The catalysed reaction is Release of an N-terminal amino acid, Xaa, from a peptide or arylamide. Xaa is preferably Glu or Asp but may be other amino acids, including Leu, Met, His, Cys and Gln.. Probably plays an important role in intracellular peptide degradation. The polypeptide is Peptidase B (Vibrio parahaemolyticus serotype O3:K6 (strain RIMD 2210633)).